Consider the following 745-residue polypeptide: F-box only protein 30 (745 aa).

Residues 48–109 (EHRLLCPFER…SYADRKSYEN (62 aa)) form a TRAF-type zinc finger. 2 disordered regions span residues 211–231 (NTSV…LEDQ) and 305–324 (GDSK…SDGT). The segment covering 222 to 231 (QNARESLEDQ) has biased composition (basic and acidic residues). A compositionally biased stretch (polar residues) spans 305–314 (GDSKQSNLTN). The region spanning 610–658 (NDHLSSLPFEVLQHIAGFLDGFSLCQLSCVSKLMRDVCGSLLQSRGMVI) is the F-box domain.

Part of a SCF (SKP1-cullin-F-box) protein ligase complex. Interacts with SKP1, CUL1 and RBX1/ROC1. In terms of processing, auto-ubiquitinated. Post-translationally, may be neddylated. Neddylation may be required for E3 ligase activity.

Its pathway is protein modification; protein ubiquitination. Its function is as follows. Substrate-recognition component of the SCF (SKP1-CUL1-F-box protein)-type E3 ubiquitin ligase complex. Required for muscle atrophy following denervation. This is F-box only protein 30 (FBXO30) from Homo sapiens (Human).